We begin with the raw amino-acid sequence, 384 residues long: Probable intron-encoded endonuclease Cox1-I1b (384 aa).

It belongs to the LAGLIDADG endonuclease family.

It localises to the mitochondrion. In terms of biological role, probable mitochondrial DNA endonuclease involved in intron homing. The protein is Probable intron-encoded endonuclease Cox1-I1b (cox1-I1b) of Schizosaccharomyces pombe (strain 972 / ATCC 24843) (Fission yeast).